A 210-amino-acid polypeptide reads, in one-letter code: Na(+)-translocating NADH-quinone reductase subunit D (210 aa).

The next 5 membrane-spanning stretches (helical) occupy residues 42-62 (FVMTLAVTFVTALSNFFVSLI), 72-92 (IIVQMAIIASLVIVVDQILKA), 103-123 (VFVGLIITNCIVMGRAEAFAM), 131-151 (LIDGIGNGLGYGFVLITVGFF), and 178-198 (NGLMLLAPSAFFLIGFMIWAI).

Belongs to the NqrDE/RnfAE family. As to quaternary structure, composed of six subunits; NqrA, NqrB, NqrC, NqrD, NqrE and NqrF.

It is found in the cell inner membrane. The catalysed reaction is a ubiquinone + n Na(+)(in) + NADH + H(+) = a ubiquinol + n Na(+)(out) + NAD(+). Functionally, NQR complex catalyzes the reduction of ubiquinone-1 to ubiquinol by two successive reactions, coupled with the transport of Na(+) ions from the cytoplasm to the periplasm. NqrA to NqrE are probably involved in the second step, the conversion of ubisemiquinone to ubiquinol. This chain is Na(+)-translocating NADH-quinone reductase subunit D, found in Vibrio vulnificus (strain CMCP6).